Consider the following 957-residue polypeptide: Glycine dehydrogenase (decarboxylating) (957 aa).

Residue lysine 708 is modified to N6-(pyridoxal phosphate)lysine.

This sequence belongs to the GcvP family. The glycine cleavage system is composed of four proteins: P, T, L and H. Pyridoxal 5'-phosphate serves as cofactor.

It carries out the reaction N(6)-[(R)-lipoyl]-L-lysyl-[glycine-cleavage complex H protein] + glycine + H(+) = N(6)-[(R)-S(8)-aminomethyldihydrolipoyl]-L-lysyl-[glycine-cleavage complex H protein] + CO2. Its function is as follows. The glycine cleavage system catalyzes the degradation of glycine. The P protein binds the alpha-amino group of glycine through its pyridoxal phosphate cofactor; CO(2) is released and the remaining methylamine moiety is then transferred to the lipoamide cofactor of the H protein. This chain is Glycine dehydrogenase (decarboxylating), found in Escherichia coli O17:K52:H18 (strain UMN026 / ExPEC).